Reading from the N-terminus, the 211-residue chain is Small ribosomal subunit protein uS4 (211 aa).

The region spanning 98-161 is the S4 RNA-binding domain; the sequence is RRLDNVVYRL…RDIPFIKENL (64 aa).

It belongs to the universal ribosomal protein uS4 family. As to quaternary structure, part of the 30S ribosomal subunit. Contacts protein S5. The interaction surface between S4 and S5 is involved in control of translational fidelity.

One of the primary rRNA binding proteins, it binds directly to 16S rRNA where it nucleates assembly of the body of the 30S subunit. In terms of biological role, with S5 and S12 plays an important role in translational accuracy. This is Small ribosomal subunit protein uS4 from Aquifex aeolicus (strain VF5).